Reading from the N-terminus, the 409-residue chain is Broad specificity amino-acid racemase (409 aa).

The N-terminal stretch at 1–24 (MPFRRTLLAASLALLITGQAPLYA) is a signal peptide. Cysteines 71 and 97 form a disulfide. Residue Lys-75 is the Proton acceptor of the active site. N6-(pyridoxal phosphate)lysine is present on Lys-75. Arg-174 is a substrate binding site. Tyr-301 (proton acceptor) is an active-site residue. Residue Met-349 coordinates substrate.

The protein belongs to the alanine racemase family. Bsr subfamily. Requires pyridoxal 5'-phosphate as cofactor.

It localises to the periplasm. The catalysed reaction is an L-alpha-amino acid = a D-alpha-amino acid. It catalyses the reaction L-lysine = D-lysine. The enzyme catalyses L-arginine = D-arginine. It carries out the reaction L-glutamine = D-glutamine. Functionally, amino-acid racemase able to utilize a broad range of substrates. Reversibly racemizes 9 of the 19 natural chiral amino acids known, including both positively charged amino acids (Lys, Arg and His) and non-beta-branched aliphatic amino acids (Ala, Leu, Met, Ser, Gln and Asn). Among these amino acids, activity is the highest with lysine and arginine, and poor or very poor with the others. Plays a primary role in the catabolism of basic amino acid, that allows P.putida strain KT2440 to grow on L-Lys and L-Arg as the sole source of carbon and nitrogen, through conversion to their respective D-enantiomers. In Pseudomonas putida (strain ATCC 47054 / DSM 6125 / CFBP 8728 / NCIMB 11950 / KT2440), this protein is Broad specificity amino-acid racemase.